The sequence spans 478 residues: MQQQEQQQGGMKVKVQRFGSYLSGMIMPNIGAFIAWGIITALFIPAGWFPNEQLNTLVSPMITYLLPLLIAYTGGKMIYDHRGGVVGATAAIGVIVGSDIPMFLGAMIMGPLGGYLIKQTDKLFKDKVKQGFEMLINNFTAGIVGAALTILAFYAIGPVVLTLNKLLAAGVEVIVHANLLPVASVFVEPAKVLFLNNAINHGILSPIGIEQASQTGKSILFLVEANPGPGLGILLAYMFFGKGSSKSTAPGAAIIHFFGGIHEIYFPYILMKPALILAAIAGGASGLLTFTIFNAGLVAAASPGSIIALMAMTPRGGYFGVLAGVLVAAAVSFIVSAVILKSSKASEEDLAAATEKMQSMKGKKSQAAAALEAEQAKAEEASELSPESVNKIIFACDAGMGSSAMGASILRNKVKKAELDISVTNTAINNLPSDADIVITHKDLTDRAKAKLPNATHISVDNFLNSPKYDELIEKLKK.

Topologically, residues 1–29 (MQQQEQQQGGMKVKVQRFGSYLSGMIMPN) are cytoplasmic. Positions 18–347 (FGSYLSGMIM…VILKSSKASE (330 aa)) constitute a PTS EIIC type-2 domain. Residues 30–51 (IGAFIAWGIITALFIPAGWFPN) form a helical membrane-spanning segment. The Extracellular portion of the chain corresponds to 52 to 55 (EQLN). A helical membrane pass occupies residues 56 to 76 (TLVSPMITYLLPLLIAYTGGK). Residues 77–139 (MIYDHRGGVV…QGFEMLINNF (63 aa)) lie on the Cytoplasmic side of the membrane. A helical membrane pass occupies residues 140-161 (TAGIVGAALTILAFYAIGPVVL). Over 162 to 170 (TLNKLLAAG) the chain is Extracellular. The chain crosses the membrane as a helical span at residues 171 to 191 (VEVIVHANLLPVASVFVEPAK). Residues 192 to 278 (VLFLNNAINH…ILMKPALILA (87 aa)) lie on the Cytoplasmic side of the membrane. Residues 279-298 (AIAGGASGLLTFTIFNAGLV) form a helical membrane-spanning segment. Over 299 to 318 (AAASPGSIIALMAMTPRGGY) the chain is Extracellular. A helical transmembrane segment spans residues 319-340 (FGVLAGVLVAAAVSFIVSAVIL). Topologically, residues 341-478 (KSSKASEEDL…YDELIEKLKK (138 aa)) are cytoplasmic. A PTS EIIB type-2 domain is found at 390 to 478 (NKIIFACDAG…YDELIEKLKK (89 aa)). The active-site Phosphocysteine intermediate; for EIIB activity is Cys396. Phosphocysteine; by EIIA is present on Cys396.

As to quaternary structure, homodimer.

It is found in the cell membrane. It catalyses the reaction D-mannitol(out) + N(pros)-phospho-L-histidyl-[protein] = D-mannitol 1-phosphate(in) + L-histidyl-[protein]. Its function is as follows. The phosphoenolpyruvate-dependent sugar phosphotransferase system (sugar PTS), a major carbohydrate active transport system, catalyzes the phosphorylation of incoming sugar substrates concomitantly with their translocation across the cell membrane. The enzyme II CmtAB PTS system is involved in D-mannitol transport. The chain is PTS system mannitol-specific EIICB component from Bacillus subtilis (strain 168).